The chain runs to 201 residues: Ephrin-A4 (201 aa).

A signal peptide spans 1–25 (MRLLPLLRTVLWAAFLGSPLRGGSS). Residues 26-155 (LRHVVYWNSS…RLQVSVCCKE (130 aa)) form the Ephrin RBD domain. N33 carries N-linked (GlcNAc...) asparagine glycosylation. Intrachain disulfides connect C58/C99 and C86/C144. S170 carries GPI-anchor amidated serine lipidation. Residues 171 to 201 (GTSGWRGGDTPSPLCLLLLLLLLILRLLRIL) constitute a propeptide, removed in mature form.

The protein belongs to the ephrin family. As to expression, expressed in the adult spleen, lymph node, prostate, ovary, small intestine, and colon, and in fetal heart, lung, liver and kidney. Also detected in hematopoietic cell lines.

Its subcellular location is the cell membrane. It is found in the secreted. Its function is as follows. Cell surface GPI-bound ligand for Eph receptors, a family of receptor tyrosine kinases which are crucial for migration, repulsion and adhesion during neuronal, vascular and epithelial development. Binds promiscuously Eph receptors residing on adjacent cells, leading to contact-dependent bidirectional signaling into neighboring cells. May play a role in the interaction between activated B-lymphocytes and dendritic cells in tonsils. The protein is Ephrin-A4 (EFNA4) of Homo sapiens (Human).